We begin with the raw amino-acid sequence, 652 residues long: Acetyl-coenzyme A synthetase (652 aa).

Residues 191–194 (RAGR), Thr311, and Asn335 each bind CoA. Residues 387-389 (GEP), 411-416 (DTWWQT), Asp500, and Arg515 each bind ATP. A CoA-binding site is contributed by Ser523. Arg526 is an ATP binding site. Residues Val537, His539, and Ile542 each contribute to the Mg(2+) site. Arg584 contributes to the CoA binding site. Lys609 bears the N6-acetyllysine; by autocatalysis mark.

It belongs to the ATP-dependent AMP-binding enzyme family. Forms a 1:1 complex with CobB/NAD-dependent deacetylase. Mg(2+) serves as cofactor. In terms of processing, autoacetylated. Deacetylation by CobB activates the enzyme.

It catalyses the reaction acetate + ATP + CoA = acetyl-CoA + AMP + diphosphate. Catalyzes the conversion of acetate into acetyl-CoA (AcCoA), an essential intermediate at the junction of anabolic and catabolic pathways. Acs undergoes a two-step reaction. In the first half reaction, Acs combines acetate with ATP to form acetyl-adenylate (AcAMP) intermediate. In the second half reaction, it can then transfer the acetyl group from AcAMP to the sulfhydryl group of CoA, forming the product AcCoA. Functionally, enables the cell to use acetate during aerobic growth to generate energy via the TCA cycle, and biosynthetic compounds via the glyoxylate shunt. Acetylates CheY, the response regulator involved in flagellar movement and chemotaxis. The chain is Acetyl-coenzyme A synthetase from Escherichia coli (strain K12).